The following is a 143-amino-acid chain: Small ribosomal subunit protein uS12B (143 aa).

P62 bears the 3,4-dihydroxyproline mark.

It belongs to the universal ribosomal protein uS12 family. In terms of assembly, component of the small ribosomal subunit (SSU). Mature yeast ribosomes consist of a small (40S) and a large (60S) subunit. The 40S small subunit contains 1 molecule of ribosomal RNA (18S rRNA) and at least 33 different proteins. The large 60S subunit contains 3 rRNA molecules (25S, 5.8S and 5S rRNA) and at least 46 different proteins. Hydroxylation at Pro-62 affects translation termination efficiency.

The protein localises to the cytoplasm. The protein resides in the nucleus. It is found in the nucleolus. Component of the ribosome, a large ribonucleoprotein complex responsible for the synthesis of proteins in the cell. The small ribosomal subunit (SSU) binds messenger RNAs (mRNAs) and translates the encoded message by selecting cognate aminoacyl-transfer RNA (tRNA) molecules. The large subunit (LSU) contains the ribosomal catalytic site termed the peptidyl transferase center (PTC), which catalyzes the formation of peptide bonds, thereby polymerizing the amino acids delivered by tRNAs into a polypeptide chain. The nascent polypeptides leave the ribosome through a tunnel in the LSU and interact with protein factors that function in enzymatic processing, targeting, and the membrane insertion of nascent chains at the exit of the ribosomal tunnel. The protein is Small ribosomal subunit protein uS12B (rps2302) of Schizosaccharomyces pombe (strain 972 / ATCC 24843) (Fission yeast).